Consider the following 361-residue polypeptide: MSTSSQSYPMSGGDDQHSYIHNSSYQKAGIDGVQEKARQYILENLDLLNMNPNLSTFTIADFGCSIGPNTFHAVQNIIDIVKLKHLKESQEDSRVAPLEFQVYFNDLPNNDFNTLFRTQPPSSKQEYFSVGVPGSFYGRVLPRNSIHIGNTSFTTHWLSKVPEEVCDKNSLAWNKNYIHCNNLIEEVTEAYKVQFEKDMGVFLKARAEELVPGGLMITLGQCLPDGVAMYETWSGIVKDTIGDCLQDMATLGVTTEEKIEMFNLPVYFPQVSELKGAIEQNIRFTIEMMEIVSHPLEAVQLSNNFITSMYRAILSTVIERHFGGSVVDELFRQFAKKLSEHPIDFEKCKKQMVYHIVLKRK.

S-adenosyl-L-homocysteine is bound by residues Y19, C64, N69, D106, L107, S135, and F136. Residues N174, E260, F262, and N263 each contribute to the Mg(2+) site.

It belongs to the methyltransferase superfamily. Type-7 methyltransferase family. As to quaternary structure, homodimer. The cofactor is Mg(2+).

The protein is Probable S-adenosylmethionine-dependent methyltransferase At5g38780 of Arabidopsis thaliana (Mouse-ear cress).